Consider the following 419-residue polypeptide: UDP-N-acetylglucosamine 1-carboxyvinyltransferase (419 aa).

A phosphoenolpyruvate-binding site is contributed by 22 to 23; sequence KN. Arg92 contacts UDP-N-acetyl-alpha-D-glucosamine. The active-site Proton donor is the Cys116. 2-(S-cysteinyl)pyruvic acid O-phosphothioketal is present on Cys116. UDP-N-acetyl-alpha-D-glucosamine contacts are provided by residues 121–125, Asp306, and Ile328; that span reads RPIDL.

This sequence belongs to the EPSP synthase family. MurA subfamily.

Its subcellular location is the cytoplasm. It carries out the reaction phosphoenolpyruvate + UDP-N-acetyl-alpha-D-glucosamine = UDP-N-acetyl-3-O-(1-carboxyvinyl)-alpha-D-glucosamine + phosphate. It participates in cell wall biogenesis; peptidoglycan biosynthesis. Cell wall formation. Adds enolpyruvyl to UDP-N-acetylglucosamine. Target for the antibiotic fosfomycin. Involved in heteroresistance to antibiotic fosfomycin. Heteroresistance is the ability of a clonal population to grow one or several subpopulations at a frequency of 10(-7) to 10(-3) in the presence of a higher antibiotic concentration than that predicted to be effective by measurement of the minimum inhibitory concentration (MIC). The sequence is that of UDP-N-acetylglucosamine 1-carboxyvinyltransferase from Streptococcus pneumoniae serotype 2 (strain D39 / NCTC 7466).